We begin with the raw amino-acid sequence, 509 residues long: Dihydrolipoyl dehydrogenase, mitochondrial (509 aa).

The N-terminal 35 residues, 1 to 35, are a transit peptide targeting the mitochondrion; it reads MQSWSRVYCSLAKRGHFSRISHGLQAVSAVPLRTY. At Lys-66 the chain carries N6-acetyllysine; alternate. An N6-succinyllysine; alternate modification is found at Lys-66. FAD contacts are provided by residues 71–80 and Lys-89; that span reads EKNETLGGTC. Cys-80 and Cys-85 are oxidised to a cystine. An N6-acetyllysine; alternate mark is found at Lys-104, Lys-122, Lys-132, and Lys-143. 4 positions are modified to N6-succinyllysine; alternate: Lys-104, Lys-122, Lys-132, and Lys-143. Gly-154 serves as a coordination point for FAD. Residues Lys-159 and Lys-166 each carry the N6-succinyllysine modification. FAD is bound at residue 183–185; sequence TGS. Residues 220–227 and Glu-243 each bind NAD(+); that span reads GAGVIGVE. Residues Lys-273 and Lys-277 each carry the N6-succinyllysine modification. Val-278 serves as a coordination point for NAD(+). Ser-285 and Ser-297 each carry phosphoserine. Residue Gly-314 coordinates NAD(+). N6-acetyllysine is present on Lys-346. Residues Asp-355 and 361–364 contribute to the FAD site; that span reads MLAH. Residue Lys-410 is modified to N6-acetyllysine; alternate. Position 410 is an N6-succinyllysine; alternate (Lys-410). Lys-417 and Lys-420 each carry N6-acetyllysine. N6-succinyllysine is present on Lys-430. His-487 functions as the Proton acceptor in the catalytic mechanism. Phosphoserine is present on Ser-502. Lys-505 carries the post-translational modification N6-acetyllysine; alternate. Lys-505 is subject to N6-succinyllysine; alternate.

Belongs to the class-I pyridine nucleotide-disulfide oxidoreductase family. Homodimer. Part of the multimeric pyruvate dehydrogenase complex that contains multiple copies of pyruvate dehydrogenase (subunits PDHA (PDHA1 or PDHA2) and PDHB, E1), dihydrolipoamide acetyltransferase (DLAT, E2) and lipoamide dehydrogenase (DLD, E3). These subunits are bound to an inner core composed of about 48 DLAT and 12 PDHX molecules (by non covalent bonds). The 2-oxoglutarate dehydrogenase complex is composed of OGDH (2-oxoglutarate dehydrogenase; E1), DLST (dihydrolipoamide succinyltransferase; E2), DLD (dihydrolipoamide dehydrogenase; E3) and the assembly factor KGD4. It contains multiple copies of the three enzymatic components (E1, E2 and E3). In the nucleus, the 2-oxoglutarate dehydrogenase complex associates with KAT2A. Interacts with PDHX. Requires FAD as cofactor. Tyrosine phosphorylated.

The protein localises to the mitochondrion matrix. It localises to the nucleus. Its subcellular location is the cell projection. It is found in the cilium. The protein resides in the flagellum. The protein localises to the cytoplasmic vesicle. It localises to the secretory vesicle. Its subcellular location is the acrosome. The enzyme catalyses N(6)-[(R)-dihydrolipoyl]-L-lysyl-[protein] + NAD(+) = N(6)-[(R)-lipoyl]-L-lysyl-[protein] + NADH + H(+). Its function is as follows. Lipoamide dehydrogenase is a component of the glycine cleavage system as well as an E3 component of three alpha-ketoacid dehydrogenase complexes (pyruvate-, alpha-ketoglutarate-, and branched-chain amino acid-dehydrogenase complex). The 2-oxoglutarate dehydrogenase complex is mainly active in the mitochondrion. A fraction of the 2-oxoglutarate dehydrogenase complex also localizes in the nucleus and is required for lysine succinylation of histones: associates with KAT2A on chromatin and provides succinyl-CoA to histone succinyltransferase KAT2A. In monomeric form may have additional moonlighting function as serine protease. Involved in the hyperactivation of spermatazoa during capacitation and in the spermatazoal acrosome reaction. The polypeptide is Dihydrolipoyl dehydrogenase, mitochondrial (DLD) (Canis lupus familiaris (Dog)).